The chain runs to 429 residues: MKVLVIGNGGREHALAWKAAQSPLVETVFVAPGNAGTALEPTLQNVAIGVTDIPALLDFAQNEKVDLTIVGPEAPLVKGVVDTFRAAGMKIFGPTAGAAQLEGSKAFTKDFLARHNIPTAEYQNFTEVEPALAYLREKGAPIVIKADGLAAGKGVIVAMTLEEAEAAVHDMLAGNAFGDAGHRIVIEEFLDGEEASFIVMVDGEHVLPMATSQDHKRVGDKDTGPNTGGMGAYSPAPVVTDDVHQRTMERIIWPTVKGMASEGNTYTGFLYAGLMIDKQGNPKVIEFNCRFGDPETQPIMLRMKSDLVELCLAACEGKLDEKTSEWDERASLGVVMAAGGYPGDYRTGDVIHGLPLEEVEDGKVFHAGTKLADDEQVVTSGGRVLCVTALGHTVAEAQKRAYALMTDIHWDDCFCRKDIGWRAIEREQN.

An ATP-grasp domain is found at 109 to 316; sequence KDFLARHNIP…LVELCLAACE (208 aa). Residue 135-196 coordinates ATP; the sequence is LREKGAPIVI…EEFLDGEEAS (62 aa). The disordered stretch occupies residues 212–237; the sequence is SQDHKRVGDKDTGPNTGGMGAYSPAP. Positions 213 to 223 are enriched in basic and acidic residues; sequence QDHKRVGDKDT. Mg(2+) is bound by residues E286 and N288.

The protein belongs to the GARS family. As to quaternary structure, monomer. Requires Mg(2+) as cofactor. Mn(2+) serves as cofactor.

The catalysed reaction is 5-phospho-beta-D-ribosylamine + glycine + ATP = N(1)-(5-phospho-beta-D-ribosyl)glycinamide + ADP + phosphate + H(+). Its pathway is purine metabolism; IMP biosynthesis via de novo pathway; N(1)-(5-phospho-D-ribosyl)glycinamide from 5-phospho-alpha-D-ribose 1-diphosphate: step 2/2. The polypeptide is Phosphoribosylamine--glycine ligase (Escherichia coli O157:H7).